Here is a 222-residue protein sequence, read N- to C-terminus: Superoxide dismutase [Mn], mitochondrial (222 aa).

The N-terminal 24 residues, 1-24 (MLSRGVCGTSRQLAPALGYLGSRQ), are a transit peptide targeting the mitochondrion. His-50 lines the Mn(2+) pocket. At Tyr-58 the chain carries 3'-nitrotyrosine. 2 positions are modified to N6-acetyllysine; alternate: Lys-68 and Lys-75. N6-succinyllysine; alternate is present on residues Lys-68 and Lys-75. His-98 is a Mn(2+) binding site. Lys-114 is subject to N6-acetyllysine. 2 positions are modified to N6-acetyllysine; alternate: Lys-122 and Lys-130. Residues Lys-122 and Lys-130 each carry the N6-succinyllysine; alternate modification. Asp-183 and His-187 together coordinate Mn(2+). The residue at position 202 (Lys-202) is an N6-acetyllysine.

The protein belongs to the iron/manganese superoxide dismutase family. As to quaternary structure, homotetramer. It depends on Mn(2+) as a cofactor. In terms of processing, nitrated under oxidative stress. Nitration coupled with oxidation inhibits the catalytic activity. Acetylation at Lys-122 decreases enzymatic activity. Deacetylated by SIRT3 upon exposure to ionizing radiations or after long fasting. Post-translationally, polyubiquitinated; leading to proteasomal degradation. Deubiquitinated by USP36 which increases protein stability.

It localises to the mitochondrion matrix. The enzyme catalyses 2 superoxide + 2 H(+) = H2O2 + O2. Its function is as follows. Destroys superoxide anion radicals which are normally produced within the cells and which are toxic to biological systems. This chain is Superoxide dismutase [Mn], mitochondrial (SOD2), found in Pongo pygmaeus (Bornean orangutan).